Here is a 220-residue protein sequence, read N- to C-terminus: Dual specificity phosphatase 29 (220 aa).

Residues 1 to 15 (MTSGEVKTSLKNAYS) are compositionally biased toward polar residues. The interval 1–29 (MTSGEVKTSLKNAYSSAKRLSPKMEEEGE) is disordered. The 149-residue stretch at 54–202 (HVNEVWPKLY…LRELDKQLVQ (149 aa)) folds into the Tyrosine-protein phosphatase domain. 146-153 (HCVMGRSR) lines the substrate pocket. Cys147 serves as the catalytic Phosphocysteine intermediate.

This sequence belongs to the protein-tyrosine phosphatase family. Non-receptor class dual specificity subfamily. In terms of assembly, homodimer. Interacts with PRKAA2.

The protein resides in the cytoplasm. Its subcellular location is the nucleus. It carries out the reaction O-phospho-L-tyrosyl-[protein] + H2O = L-tyrosyl-[protein] + phosphate. The enzyme catalyses O-phospho-L-seryl-[protein] + H2O = L-seryl-[protein] + phosphate. The catalysed reaction is O-phospho-L-threonyl-[protein] + H2O = L-threonyl-[protein] + phosphate. In terms of biological role, dual specificity phosphatase able to dephosphorylate phosphotyrosine, phosphoserine and phosphothreonine residues within the same substrate, with a preference for phosphotyrosine as a substrate. Involved in the modulation of intracellular signaling cascades. In skeletal muscle regulates systemic glucose homeostasis by activating, AMPK, an energy sensor protein kinase. Affects MAP kinase signaling though modulation of the MAPK1/2 cascade in skeletal muscle promoting muscle cell differentiation, development and atrophy. The polypeptide is Dual specificity phosphatase 29 (Homo sapiens (Human)).